The chain runs to 274 residues: Large ribosomal subunit protein uL2c (274 aa).

The segment at 224–274 (NPVDHPHGGGEGRAPIGRKKPTTPWGYPALGRKSRKRNKYSEKFILRHRSK) is disordered.

Belongs to the universal ribosomal protein uL2 family. As to quaternary structure, part of the 50S ribosomal subunit.

Its subcellular location is the plastid. The protein resides in the chloroplast. This chain is Large ribosomal subunit protein uL2c (rpl2), found in Ipomoea purpurea (Common morning glory).